The chain runs to 447 residues: uncharacterized protein (447 aa).

Positions 392–435 (RFTKPSSSVAKSTSPSLRNSGSDESDLNQSDSDKEDERVVPVPK) are disordered. The span at 395–407 (KPSSSVAKSTSPS) shows a compositional bias: low complexity. Residues 408 to 421 (LRNSGSDESDLNQS) show a composition bias toward polar residues.

This is an uncharacterized protein from Invertebrate iridescent virus 3 (IIV-3).